A 679-amino-acid chain; its full sequence is Altered inheritance of mitochondria protein 21 (679 aa).

A disordered region spans residues 1-85; sequence MPSEVTPKVP…LQRPVRRSTT (85 aa). The span at 9–19 shows a compositional bias: basic and acidic residues; the sequence is VPERPSRRKTS. Phosphothreonine is present on T18. Phosphoserine is present on S36. Position 58 is a phosphothreonine (T58). S70 carries the post-translational modification Phosphoserine. Residue T85 is modified to Phosphothreonine. At S104 the chain carries Phosphoserine. Residues 110–119 show a composition bias toward basic residues; sequence NIHNVSRKKS. Disordered regions lie at residues 110–522, 549–580, and 593–679; these read NIHN…EKIE, IDTTPGEQAERALDEKSKSIPEEQREQSPNKM, and EKLP…FHSL. Polar residues-rich tracts occupy residues 133 to 149 and 164 to 178; these read QNGQRSASDNKTSTNPS and SAISPSNLVNKSNNE. Positions 179–213 are enriched in basic and acidic residues; that stretch reads VTEHSDSEDLTEKQKVHAALDNEAGDRSHFEEKLI. Residues S183, S206, and S231 each carry the phosphoserine modification. Basic and acidic residues predominate over residues 243–272; the sequence is SDDKAEKFTKHPESSLEELQKHQEQQEEKI. At T277 the chain carries Phosphothreonine. S284 is modified (phosphoserine). A compositionally biased stretch (polar residues) spans 296-323; it reads EVNSQPQGPSDTETVIAATSSNVPSQIA. S324 carries the post-translational modification Phosphoserine. 2 stretches are compositionally biased toward basic and acidic residues: residues 339 to 361 and 372 to 383; these read KKDFEAHVQKEELPNTQEKRVSE and EESKIPKIPSER. An interaction with SH3 domain of ABP1 region spans residues 383-396; sequence RPKRRAPPPVPKKP. 2 stretches are compositionally biased toward polar residues: residues 414–427 and 437–452; these read DLHNNGNSSATTAS and SSITSDTTKADFTSKL. Residues 471 to 482 are compositionally biased toward basic and acidic residues; the sequence is LEKKLSSPDTES. Basic residues predominate over residues 501 to 512; sequence RRGRGPRGRKLP. At T552 the chain carries Phosphothreonine. The segment covering 556–576 has biased composition (basic and acidic residues); that stretch reads QAERALDEKSKSIPEEQREQS. A Phosphoserine modification is found at S576. The span at 603–613 shows a compositional bias: polar residues; that stretch reads PLSQLPQTNAV. S620, S623, S625, S627, S667, S671, S675, and S678 each carry phosphoserine. Residues 667-679 are compositionally biased toward basic and acidic residues; sequence SALHSEEASFHSL.

Belongs to the AIM21 family. As to quaternary structure, interacts with ribosomes. Interacts with ABP1.

Its subcellular location is the cytoplasm. It is found in the cytoskeleton. It localises to the actin patch. Its function is as follows. Involved in mitochondrial migration along actin filaments. This Saccharomyces cerevisiae (strain ATCC 204508 / S288c) (Baker's yeast) protein is Altered inheritance of mitochondria protein 21 (AIM21).